We begin with the raw amino-acid sequence, 273 residues long: Undecaprenyl-diphosphatase (273 aa).

Helical transmembrane passes span 6 to 26 (SLLI…LPVS), 45 to 65 (AKTF…VMFW), 90 to 110 (LTLI…LLFH), 116 to 136 (LFNP…LIAA), 190 to 210 (YAAS…ATAL), 222 to 242 (GDIP…LIAI), and 252 to 272 (ISFI…YVVF).

Belongs to the UppP family.

The protein resides in the cell inner membrane. The catalysed reaction is di-trans,octa-cis-undecaprenyl diphosphate + H2O = di-trans,octa-cis-undecaprenyl phosphate + phosphate + H(+). In terms of biological role, catalyzes the dephosphorylation of undecaprenyl diphosphate (UPP). Confers resistance to bacitracin. The protein is Undecaprenyl-diphosphatase of Escherichia coli O7:K1 (strain IAI39 / ExPEC).